Consider the following 304-residue polypeptide: Xylanase inhibitor protein 1 (304 aa).

The N-terminal stretch at 1–30 (MAPLAARRPACLLALLSVAAALFLTPTALA) is a signal peptide. The 269-residue stretch at 36–304 (GQVTVFWGRN…NYSSLIKYYA (269 aa)) folds into the GH18 domain. Residues Cys55 and Cys96 are joined by a disulfide bond. Asn119 carries N-linked (GlcNAc...) asparagine glycosylation. Glu158 acts as the Proton donor in catalysis. Positions 178–184 (IRGGPGK) are interaction with fungal GH11 xylanase. Residues Cys194 and Cys225 are joined by a disulfide bond. Positions 262–275 (HPKNVYYGVAPVAQ) are interaction with fungal GH10 xylanase. Residue Asn295 is glycosylated (N-linked (GlcNAc...) asparagine).

The protein belongs to the glycosyl hydrolase 18 family. Xylanase inhibitor subfamily. As to quaternary structure, binds to fungal GH10 and GH11 xylanases. Also forms a ternary complex with barley alpha-amylase 1 (AMY1) and insoluble starch.

Its subcellular location is the secreted. Functionally, fungal xylanase inhibitor. Possesses competitive inhibiting activity against fungal endo-1,4-beta-D-xylanases belonging to glycoside hydrolase family 10 (GH10) and family 11 (GH11). Possesses also inhibitory activity towards barley alpha-amylases. Binding to xylanases or amylases is necessary for inhibition activity. May function in plant defense against secreted fungal pathogen xylanases. Is similar to class III chitinases, but does not exhibit chitinase activity. This is Xylanase inhibitor protein 1 from Triticum aestivum (Wheat).